The sequence spans 526 residues: Sugar transport protein 13 (526 aa).

Over 1-18 (MTGGGFATSANGVEFEAK) the chain is Cytoplasmic. Residues 19 to 39 (ITPIVIISCIMAATGGLMFGY) traverse the membrane as a helical segment. Topologically, residues 40 to 81 (DVGVSGGVTSMPDFLEKFFPVVYRKVVAGADKDSNYCKYDNQ) are extracellular. The chain crosses the membrane as a helical span at residues 82 to 102 (GLQLFTSSLYLAGLTATFFAS). The Cytoplasmic portion of the chain corresponds to 103 to 111 (YTTRTLGRR). The chain crosses the membrane as a helical span at residues 112–132 (LTMLIAGVFFIIGVALNAGAQ). At 133 to 141 (DLAMLIAGR) the chain is on the extracellular side. The chain crosses the membrane as a helical span at residues 142–162 (ILLGCGVGFANQAVPLFLSEI). Residues 163–168 (APTRIR) are Cytoplasmic-facing. Residues 169–189 (GGLNILFQLNVTIGILFANLV) traverse the membrane as a helical segment. Over 190–203 (NYGTAKIKGGWGWR) the chain is Extracellular. The helical transmembrane segment at 204 to 224 (LSLGLAGIPALLLTVGALLVT) threads the bilayer. Residues 225–296 (ETPNSLVERG…IAVALQIFQQ (72 aa)) lie on the Cytoplasmic side of the membrane. Residues 297–317 (CTGINAIMFYAPVLFSTLGFG) form a helical membrane-spanning segment. Residues 318–319 (SD) are Extracellular-facing. The helical transmembrane segment at 320-340 (ASLYSAVVTGAVNVLSTLVSI) threads the bilayer. The Cytoplasmic portion of the chain corresponds to 341–349 (YSVDKVGRR). Residues 350 to 370 (VLLLEAGVQMFFSQVVIAIIL) form a helical membrane-spanning segment. Residues 371–383 (GVKVTDTSTNLSK) lie on the Extracellular side of the membrane. Residues 384 to 404 (GFAILVVVMICTYVAAFAWSW) form a helical membrane-spanning segment. Topologically, residues 405 to 426 (GPLGWLIPSETFPLETRSAGQS) are cytoplasmic. A helical membrane pass occupies residues 427 to 447 (VTVCVNLLFTFIIAQAFLSML). The Extracellular portion of the chain corresponds to 448 to 451 (CHFK). Residues 452–472 (FGIFIFFSAWVLIMSVFVMFL) traverse the membrane as a helical segment. At 473–526 (LPETKNIPIEEMTERVWKKHWFWARFMDDHNDHEFVNGEKSNGKSNGFDPSTRL) the chain is on the cytoplasmic side.

The protein belongs to the major facilitator superfamily. Sugar transporter (TC 2.A.1.1) family.

It localises to the cell membrane. Its function is as follows. Mediates an active uptake of hexoses, probably by sugar/hydrogen symport. The sequence is that of Sugar transport protein 13 (STP13) from Arabidopsis thaliana (Mouse-ear cress).